A 333-amino-acid chain; its full sequence is Fructose-1,6-bisphosphatase class 1 1 (333 aa).

Mg(2+) contacts are provided by Glu-81, Asp-100, Leu-102, and Asp-103. Residues 103–106 and Asn-191 each bind substrate; that span reads DGSS. A Mg(2+)-binding site is contributed by Glu-263.

This sequence belongs to the FBPase class 1 family. Homotetramer. The cofactor is Mg(2+).

The protein localises to the cytoplasm. It carries out the reaction beta-D-fructose 1,6-bisphosphate + H2O = beta-D-fructose 6-phosphate + phosphate. The protein operates within carbohydrate biosynthesis; Calvin cycle. This Cereibacter sphaeroides (strain ATCC 17023 / DSM 158 / JCM 6121 / CCUG 31486 / LMG 2827 / NBRC 12203 / NCIMB 8253 / ATH 2.4.1.) (Rhodobacter sphaeroides) protein is Fructose-1,6-bisphosphatase class 1 1.